A 224-amino-acid polypeptide reads, in one-letter code: Peroxiredoxin-6 (224 aa).

Positions 5–169 constitute a Thioredoxin domain; it reads LLLGDEAPNF…ILRVIISLQL (165 aa). Residues 31–40 form a required and sufficient for targeting to lysosomes and lamellar bodies region; that stretch reads DSWGILFSHP. Residue Thr44 is modified to Phosphothreonine. The active-site Cysteine sulfenic acid (-SOH) intermediate; for peroxidase activity is the Cys47. Lys63 carries the N6-acetyllysine modification. A Phosphotyrosine modification is found at Tyr89. Asp140 serves as the catalytic For phospholipase activity. At Thr177 the chain carries Phosphothreonine; by MAPK. Lys209 is modified (N6-acetyllysine; alternate). Lys209 is modified (N6-succinyllysine; alternate).

It belongs to the peroxiredoxin family. Prx6 subfamily. In terms of assembly, homodimer. Interacts with GSTP1; mediates PRDX6 glutathionylation and regeneration. Interacts with APEX1. Interacts with STH. May interact with FAM168B. May interact with HTR2A. The cofactor is Does not need Ca(2+) as cofactor.. Post-translationally, irreversibly inactivated by overoxidation of Cys-47 to sulfinic acid (Cys-SO(2)H) and sulfonic acid (Cys-SO(3)H) forms upon oxidative stress. Phosphorylation at Thr-177 by MAP kinases increases the phospholipase activity of the enzyme. The phosphorylated form exhibits a greater lysophosphatidylcholine acyltransferase activity compared to the non-phosphorylated form.

Its subcellular location is the cytoplasm. The protein resides in the lysosome. It catalyses the reaction a hydroperoxide + 2 glutathione = an alcohol + glutathione disulfide + H2O. The catalysed reaction is a 1,2-diacyl-sn-glycero-3-phosphocholine + H2O = a 1-acyl-sn-glycero-3-phosphocholine + a fatty acid + H(+). It carries out the reaction a 1-acyl-sn-glycero-3-phosphocholine + an acyl-CoA = a 1,2-diacyl-sn-glycero-3-phosphocholine + CoA. The enzyme catalyses 1-hexadecanoyl-sn-glycero-3-phosphocholine + hexadecanoyl-CoA = 1,2-dihexadecanoyl-sn-glycero-3-phosphocholine + CoA. It catalyses the reaction 1,2-dihexadecanoyl-sn-glycero-3-phosphocholine + H2O = 1-hexadecanoyl-sn-glycero-3-phosphocholine + hexadecanoate + H(+). Its function is as follows. Thiol-specific peroxidase that catalyzes the reduction of hydrogen peroxide and organic hydroperoxides to water and alcohols, respectively. Can reduce H(2)O(2) and short chain organic, fatty acid, and phospholipid hydroperoxides. Also has phospholipase activity, and can therefore either reduce the oxidized sn-2 fatty acyl group of phospholipids (peroxidase activity) or hydrolyze the sn-2 ester bond of phospholipids (phospholipase activity). These activities are dependent on binding to phospholipids at acidic pH and to oxidized phospholipds at cytosolic pH. Plays a role in cell protection against oxidative stress by detoxifying peroxides and in phospholipid homeostasis. Exhibits acyl-CoA-dependent lysophospholipid acyltransferase which mediates the conversion of lysophosphatidylcholine (1-acyl-sn-glycero-3-phosphocholine or LPC) into phosphatidylcholine (1,2-diacyl-sn-glycero-3-phosphocholine or PC). Shows a clear preference for LPC as the lysophospholipid and for palmitoyl CoA as the fatty acyl substrate. The sequence is that of Peroxiredoxin-6 (PRDX6) from Bos taurus (Bovine).